We begin with the raw amino-acid sequence, 354 residues long: Neutral protease 2 homolog AN7962 (354 aa).

The N-terminal stretch at M1–S19 is a signal peptide. The propeptide occupies P20–R178. Cystine bridges form between C184/C255 and C262/C280. Residue H305 coordinates Zn(2+). E306 is an active-site residue. Positions 309 and 320 each coordinate Zn(2+).

The protein belongs to the peptidase M35 family. Requires Zn(2+) as cofactor.

It is found in the secreted. The catalysed reaction is Preferential cleavage of bonds with hydrophobic residues in P1'. Also 3-Asn-|-Gln-4 and 8-Gly-|-Ser-9 bonds in insulin B chain.. Its function is as follows. Secreted metalloproteinase that allows assimilation of proteinaceous substrates. Shows high activities on basic nuclear substrates such as histone and protamine. The polypeptide is Neutral protease 2 homolog AN7962 (Emericella nidulans (strain FGSC A4 / ATCC 38163 / CBS 112.46 / NRRL 194 / M139) (Aspergillus nidulans)).